A 437-amino-acid chain; its full sequence is Keratin, type I cytoskeletal 13 (437 aa).

The head stretch occupies residues 1–95 (MSCRFQSSSM…GVDGGLLSGN (95 aa)). Omega-N-methylarginine occurs at positions 27 and 35. The coil 1A stretch occupies residues 96-131 (EKITMQNLNDRLASYLDKVRALEAANADLEVKIRDW). The IF rod domain maps to 96–408 (EKITMQNLND…SLLEGQDAKM (313 aa)). The linker 1 stretch occupies residues 132–150 (HLKQSPASPERDYSAYYKT). A coil 1B region spans residues 151–242 (IEELRIKILE…KNHEEEMKEF (92 aa)). The tract at residues 243–265 (SNQVVGQVNVEMDATPGIDLTRV) is linker 12. Positions 266–404 (LAEMREQYEA…ATYRSLLEGQ (139 aa)) are coil 2. The interval 405-437 (DAKMTGFNSGGNNTTTSNGSPSSNSGRPDFRKY) is tail. The disordered stretch occupies residues 408–437 (MTGFNSGGNNTTTSNGSPSSNSGRPDFRKY). Over residues 409–430 (TGFNSGGNNTTTSNGSPSSNSG) the composition is skewed to low complexity.

This sequence belongs to the intermediate filament family. In terms of assembly, heterotetramer of two type I and two type II keratins. O-glycosylated; glycans consist of single N-acetylglucosamine residues. Expressed in tongue epithelia (at protein level). Expressed in upper suprabasal layers of the corneal epithelium (at protein level).

Functionally, type 1 keratin. Maintains postnatal tongue mucosal cell homeostasis and tissue organization in response to mechanical stress, potentially via regulation of the G1/S phase cyclins CCNE1 and CCNE2. The chain is Keratin, type I cytoskeletal 13 (Krt13) from Mus musculus (Mouse).